Consider the following 240-residue polypeptide: Probable peptide export permease protein YydJ (240 aa).

A run of 6 helical transmembrane segments spans residues 13 to 33, 50 to 70, 97 to 117, 126 to 146, 153 to 173, and 210 to 230; these read VIII…FLLV, SYTV…AFFI, IAVL…IISL, ALLL…IGTI, ILIS…LVAI, and VLFI…VLRF.

As to quaternary structure, the complex is composed of 2 ATP-binding proteins (YydI), two transmembrane proteins (YydJ).

The protein resides in the cell membrane. In terms of biological role, suggested to be part of an ABC transporter complex YydIJ involved in export of the modified peptide YydF. The protein is Probable peptide export permease protein YydJ (yydJ) of Bacillus subtilis (strain 168).